The sequence spans 239 residues: 1-(5-phosphoribosyl)-5-[(5-phosphoribosylamino)methylideneamino] imidazole-4-carboxamide isomerase (239 aa).

The active-site Proton acceptor is the D8. D129 serves as the catalytic Proton donor.

It belongs to the HisA/HisF family.

It is found in the cytoplasm. It catalyses the reaction 1-(5-phospho-beta-D-ribosyl)-5-[(5-phospho-beta-D-ribosylamino)methylideneamino]imidazole-4-carboxamide = 5-[(5-phospho-1-deoxy-D-ribulos-1-ylimino)methylamino]-1-(5-phospho-beta-D-ribosyl)imidazole-4-carboxamide. It participates in amino-acid biosynthesis; L-histidine biosynthesis; L-histidine from 5-phospho-alpha-D-ribose 1-diphosphate: step 4/9. This chain is 1-(5-phosphoribosyl)-5-[(5-phosphoribosylamino)methylideneamino] imidazole-4-carboxamide isomerase, found in Roseobacter denitrificans (strain ATCC 33942 / OCh 114) (Erythrobacter sp. (strain OCh 114)).